Consider the following 152-residue polypeptide: Acidic phospholipase A2 S16-19 (152 aa).

The signal sequence occupies residues 1–19 (MYPAHLLVLLAVCVSLLGA). The propeptide occupies 20-27 (SNIPLPSL). Intrachain disulfides connect Cys-38-Cys-104, Cys-54-Cys-151, Cys-71-Cys-132, Cys-78-Cys-125, Cys-88-Cys-118, and Cys-111-Cys-123. Ca(2+) is bound by residues Tyr-55, Gly-57, and Gly-59. His-75 is a catalytic residue. A Ca(2+)-binding site is contributed by Asp-76. The active site involves Asp-126.

Belongs to the phospholipase A2 family. Group I subfamily. D49 sub-subfamily. Ca(2+) serves as cofactor. Post-translationally, this enzyme lacks one of the seven disulfide bonds found in similar PLA2 proteins. In terms of tissue distribution, expressed by the venom gland.

It localises to the secreted. The enzyme catalyses a 1,2-diacyl-sn-glycero-3-phosphocholine + H2O = a 1-acyl-sn-glycero-3-phosphocholine + a fatty acid + H(+). In terms of biological role, snake venom phospholipase A2 (PLA2) that inhibits collagen-induced platelet aggregation. PLA2 catalyzes the calcium-dependent hydrolysis of the 2-acyl groups in 3-sn-phosphoglycerides. The sequence is that of Acidic phospholipase A2 S16-19 from Austrelaps superbus (Lowland copperhead snake).